Consider the following 354-residue polypeptide: 3-isopropylmalate dehydrogenase (354 aa).

76-87 (GPRWDSAKERPE) contributes to the NAD(+) binding site. Substrate is bound by residues Arg-94, Arg-104, Arg-130, and Asp-215. Residues Asp-215, Asp-239, and Asp-243 each coordinate Mg(2+). An NAD(+)-binding site is contributed by 273–285 (GSAPDIAGKNKAN).

It belongs to the isocitrate and isopropylmalate dehydrogenases family. LeuB type 1 subfamily. As to quaternary structure, homodimer. The cofactor is Mg(2+). Mn(2+) serves as cofactor.

Its subcellular location is the cytoplasm. It catalyses the reaction (2R,3S)-3-isopropylmalate + NAD(+) = 4-methyl-2-oxopentanoate + CO2 + NADH. It functions in the pathway amino-acid biosynthesis; L-leucine biosynthesis; L-leucine from 3-methyl-2-oxobutanoate: step 3/4. Catalyzes the oxidation of 3-carboxy-2-hydroxy-4-methylpentanoate (3-isopropylmalate) to 3-carboxy-4-methyl-2-oxopentanoate. The product decarboxylates to 4-methyl-2 oxopentanoate. The protein is 3-isopropylmalate dehydrogenase of Bacillus cereus (strain ATCC 14579 / DSM 31 / CCUG 7414 / JCM 2152 / NBRC 15305 / NCIMB 9373 / NCTC 2599 / NRRL B-3711).